A 428-amino-acid polypeptide reads, in one-letter code: MLDIRLIRKEPKECESRLQKKDPAISLERLLDLDKTVRQLKADSEALLAKRKVLSGQIHKAKVANENADALIQEVNTIADQLVAFETTLQEQEALLEDLMARLPNYPDEDVPVSPDKTGNQMIKSHGEVPTFPFPPKHHMQLNEALQILDFKLPAKTTGSGWPAYCNEGVLLEWALLTYLLNKQQAHGFQLWLPPLLVKRDILFGSGQIPKFDGQYYRVEDGDRSLFLIPTAEVVLNGFHSQEILNEQDLPLCYAAFTPCFRREAGAGGAHERGLVRVHQFHKVEMFAFTTPEQEEVVYQKMLHVVEEILSELQLPYQLSLLSTGDMSFTAKKTIDAEVWLPGQKAFYEVSSISKCGDFQARRSETRYRDAQGKLHFVNTLNGSGLATPRLLVAILENYQQADGSVVIPSVLRPYMNNQEILLPKTVR.

Position 231–233 (231–233) interacts with L-serine; it reads TAE. Residues 262–264 and Val278 each bind ATP; that span reads RRE. Glu285 provides a ligand contact to L-serine. 349 to 352 serves as a coordination point for ATP; the sequence is EVSS. Ser384 serves as a coordination point for L-serine.

This sequence belongs to the class-II aminoacyl-tRNA synthetase family. Type-1 seryl-tRNA synthetase subfamily. In terms of assembly, homodimer. The tRNA molecule binds across the dimer.

Its subcellular location is the cytoplasm. It carries out the reaction tRNA(Ser) + L-serine + ATP = L-seryl-tRNA(Ser) + AMP + diphosphate + H(+). The catalysed reaction is tRNA(Sec) + L-serine + ATP = L-seryl-tRNA(Sec) + AMP + diphosphate + H(+). Its pathway is aminoacyl-tRNA biosynthesis; selenocysteinyl-tRNA(Sec) biosynthesis; L-seryl-tRNA(Sec) from L-serine and tRNA(Sec): step 1/1. Functionally, catalyzes the attachment of serine to tRNA(Ser). Is also able to aminoacylate tRNA(Sec) with serine, to form the misacylated tRNA L-seryl-tRNA(Sec), which will be further converted into selenocysteinyl-tRNA(Sec). The polypeptide is Serine--tRNA ligase (Chlamydia trachomatis serovar L2 (strain ATCC VR-902B / DSM 19102 / 434/Bu)).